Here is a 176-residue protein sequence, read N- to C-terminus: Lipoprotein signal peptidase (176 aa).

Helical transmembrane passes span 12–32 (WYWM…WVLA), 67–87 (WQRW…TIWL), and 94–116 (MWRL…IDRL). Residues Asp123 and Asp141 contribute to the active site. Residues 137-157 (FNIADSAICVGAALIIIDSII) form a helical membrane-spanning segment.

The protein belongs to the peptidase A8 family.

Its subcellular location is the cell inner membrane. It catalyses the reaction Release of signal peptides from bacterial membrane prolipoproteins. Hydrolyzes -Xaa-Yaa-Zaa-|-(S,diacylglyceryl)Cys-, in which Xaa is hydrophobic (preferably Leu), and Yaa (Ala or Ser) and Zaa (Gly or Ala) have small, neutral side chains.. It participates in protein modification; lipoprotein biosynthesis (signal peptide cleavage). Its function is as follows. This protein specifically catalyzes the removal of signal peptides from prolipoproteins. The chain is Lipoprotein signal peptidase from Shewanella woodyi (strain ATCC 51908 / MS32).